The chain runs to 394 residues: Aspergillopepsin-1 (394 aa).

The N-terminal stretch at 1 to 20 (MVVFSKTAALVLGLSSAVSA) is a signal peptide. A propeptide spans 21–69 (APAPTRKGFTINQIARPANKTRTINLPGMYARSLAKFGGTVPQSVKEAA) (activation peptide). Residues 85–391 (YLTPVTVGKS…NSEGPKLGFA (307 aa)) form the Peptidase A1 domain. Catalysis depends on residues D101 and D283. Residues C319 and C354 are joined by a disulfide bond.

Belongs to the peptidase A1 family. As to quaternary structure, monomer.

It localises to the secreted. The enzyme catalyses Hydrolysis of proteins with broad specificity. Generally favors hydrophobic residues in P1 and P1', but also accepts Lys in P1, which leads to activation of trypsinogen. Does not clot milk.. Secreted aspartic endopeptidase that allows assimilation of proteinaceous substrates. The scissile peptide bond is attacked by a nucleophilic water molecule activated by two aspartic residues in the active site. Shows a broad primary substrate specificity. Favors hydrophobic residues at the P1 and P1' positions, but also accepts a lysine residue in the P1 position, leading to the activation of trypsinogen and chymotrypsinogen A. This is Aspergillopepsin-1 (pepA) from Aspergillus niger (strain ATCC MYA-4892 / CBS 513.88 / FGSC A1513).